The primary structure comprises 153 residues: MAKKMLNKVMDFLGLEEEIDEIEEMDNEAIVEGNEEIDNIFDSSNVRNQKGKVVSIHTTTSTKVLILKPMDYDAAIEICDNLKSRKIIVVNMTSLESKIAQRLLDFIAGASYALGGSLDEIDKGVYIVSPSNVEITNELKNELSTKGILNWTK.

It belongs to the SepF family. Homodimer. Interacts with FtsZ.

It is found in the cytoplasm. Functionally, cell division protein that is part of the divisome complex and is recruited early to the Z-ring. Probably stimulates Z-ring formation, perhaps through the cross-linking of FtsZ protofilaments. Its function overlaps with FtsA. This chain is Cell division protein SepF, found in Clostridium novyi (strain NT).